A 377-amino-acid polypeptide reads, in one-letter code: Transcription factor ast-1 (377 aa).

The segment at 72 to 143 is disordered; it reads PNRMLYNDNT…SNGSSSSTES (72 aa). Composition is skewed to low complexity over residues 96 to 109 and 118 to 142; these read STSA…TSSK and TESS…SSTE. Positions 214 to 294 form a DNA-binding region, ETS; it reads TQLWQFLLEL…HGKRYAYKFD (81 aa).

Belongs to the ETS family. Expressed in the A-neurons in the male-specific genital sensilla (simple sense organs) known as rays.

Its subcellular location is the nucleus. The protein localises to the cell projection. It localises to the neuron projection. Transcription factor. Probably binds to DNA sequences containing the consensus motif 5'-CGGA[AT][AG]-3'. Positively modulates expression of dopamine pathway genes, acting as a terminal selector for differentiation of dopaminergic neurons; may act in concert with homeobox proteins ceh-40, ceh-43 and ceh-20. Required for axon navigation in some interneurons, perhaps acting in the same pathways as basement membrane protein nid-1 and unc-6/netrin. Plays a role in the differentiation of the ventral cord pioneer neuron AVG. Required for morphogenesis of the pharynx. This Caenorhabditis elegans protein is Transcription factor ast-1.